We begin with the raw amino-acid sequence, 165 residues long: Large ribosomal subunit protein uL10 (165 aa).

The protein belongs to the universal ribosomal protein uL10 family. As to quaternary structure, part of the ribosomal stalk of the 50S ribosomal subunit. The N-terminus interacts with L11 and the large rRNA to form the base of the stalk. The C-terminus forms an elongated spine to which L12 dimers bind in a sequential fashion forming a multimeric L10(L12)X complex.

Its function is as follows. Forms part of the ribosomal stalk, playing a central role in the interaction of the ribosome with GTP-bound translation factors. The protein is Large ribosomal subunit protein uL10 of Burkholderia thailandensis (strain ATCC 700388 / DSM 13276 / CCUG 48851 / CIP 106301 / E264).